A 723-amino-acid chain; its full sequence is Polyribonucleotide nucleotidyltransferase (723 aa).

Residues D497 and D503 each coordinate Mg(2+). In terms of domain architecture, KH spans 564–623 (PRLLSFRIDPELIGTVIGPGGRTIKGITERTNTKIDIEDGGIVTIASHDGAAAEAAQRII). An S1 motif domain is found at 633 to 701 (GEVFTGTITR…NRGRINLTLR (69 aa)). A disordered region spans residues 701–723 (RGVPQNGEETQSEPAPTPVAPLN).

The protein belongs to the polyribonucleotide nucleotidyltransferase family. It depends on Mg(2+) as a cofactor.

It localises to the cytoplasm. It carries out the reaction RNA(n+1) + phosphate = RNA(n) + a ribonucleoside 5'-diphosphate. Its function is as follows. Involved in mRNA degradation. Catalyzes the phosphorolysis of single-stranded polyribonucleotides processively in the 3'- to 5'-direction. This chain is Polyribonucleotide nucleotidyltransferase, found in Prochlorococcus marinus (strain MIT 9313).